The following is a 39-amino-acid chain: Potassium channel toxin alpha-KTx 2.16 (39 aa).

Intrachain disulfides connect Cys-7/Cys-29, Cys-13/Cys-34, and Cys-17/Cys-36. An Isoleucine amide modification is found at Ile-39.

The protein belongs to the short scorpion toxin superfamily. Potassium channel inhibitor family. Alpha-KTx 02 subfamily. As to expression, expressed by the venom gland.

It is found in the secreted. Functionally, blocks human voltage-gated potassium channels Kv1.2/KCNA2 (IC(50)=0.7 nM), Kv1.3/KCNA3 (IC(50)=26.2 nM) and blocks intermediate conductance calcium-activated potassium channel KCa3.1/KCNN4 (IC(50)=56 nM). The polypeptide is Potassium channel toxin alpha-KTx 2.16 (Centruroides tecomanus (Scorpion)).